Reading from the N-terminus, the 341-residue chain is UPF0324 membrane protein SMU_2059c (341 aa).

A run of 11 helical transmembrane segments spans residues 7–24 (KLSG…AWFL), 28–47 (FPLV…LAIF), 68–85 (FAVV…VLTV), 90–107 (LPII…AFLL), 120–142 (LVGV…VIQA), 147–169 (IAQS…PTLG), 178–200 (GFAL…AAAW), 211–233 (GATI…LSFY), 254–276 (VFPM…TALG), 291–310 (FCIV…VKLV), and 317–339 (IVLG…HLLG).

The protein belongs to the UPF0324 family.

It is found in the cell membrane. The sequence is that of UPF0324 membrane protein SMU_2059c from Streptococcus mutans serotype c (strain ATCC 700610 / UA159).